The primary structure comprises 505 residues: Glycerol kinase (505 aa).

Threonine 14 lines the ADP pocket. ATP is bound by residues threonine 14, threonine 15, and serine 16. Residue threonine 14 participates in sn-glycerol 3-phosphate binding. An ADP-binding site is contributed by arginine 18. 4 residues coordinate sn-glycerol 3-phosphate: arginine 84, glutamate 85, tyrosine 136, and aspartate 246. Residues arginine 84, glutamate 85, tyrosine 136, aspartate 246, and glutamine 247 each coordinate glycerol. Positions 268 and 311 each coordinate ADP. ATP is bound by residues threonine 268, glycine 311, glutamine 315, and glycine 412. ADP-binding residues include glycine 412 and asparagine 416.

The protein belongs to the FGGY kinase family.

It carries out the reaction glycerol + ATP = sn-glycerol 3-phosphate + ADP + H(+). It functions in the pathway polyol metabolism; glycerol degradation via glycerol kinase pathway; sn-glycerol 3-phosphate from glycerol: step 1/1. Inhibited by fructose 1,6-bisphosphate (FBP). Key enzyme in the regulation of glycerol uptake and metabolism. Catalyzes the phosphorylation of glycerol to yield sn-glycerol 3-phosphate. The polypeptide is Glycerol kinase (Vibrio parahaemolyticus serotype O3:K6 (strain RIMD 2210633)).